Here is a 301-residue protein sequence, read N- to C-terminus: Mycothiol acetyltransferase (301 aa).

N-acetyltransferase domains are found at residues 6-151 (EWRQ…ILRD) and 153-301 (VSLR…QYGR). 79-81 (LFV) serves as a coordination point for acetyl-CoA. Residues Glu180, Lys219, and Glu235 each contribute to the 1D-myo-inositol 2-(L-cysteinylamino)-2-deoxy-alpha-D-glucopyranoside site. Acetyl-CoA-binding positions include 239–241 (VGV) and 246–252 (QGGGLGR). Tyr273 contributes to the 1D-myo-inositol 2-(L-cysteinylamino)-2-deoxy-alpha-D-glucopyranoside binding site.

The protein belongs to the acetyltransferase family. MshD subfamily. Monomer.

It carries out the reaction 1D-myo-inositol 2-(L-cysteinylamino)-2-deoxy-alpha-D-glucopyranoside + acetyl-CoA = mycothiol + CoA + H(+). Its function is as follows. Catalyzes the transfer of acetyl from acetyl-CoA to desacetylmycothiol (Cys-GlcN-Ins) to form mycothiol. The sequence is that of Mycothiol acetyltransferase from Amycolatopsis mediterranei (strain U-32).